A 43-amino-acid chain; its full sequence is Cytochrome b559 subunit beta (43 aa).

A helical membrane pass occupies residues 18 to 34 (WLAVHTLAIPTVFFLGA). Histidine 22 serves as a coordination point for heme.

Belongs to the PsbE/PsbF family. In terms of assembly, heterodimer of an alpha subunit and a beta subunit. PSII is composed of 1 copy each of membrane proteins PsbA, PsbB, PsbC, PsbD, PsbE, PsbF, PsbH, PsbI, PsbJ, PsbK, PsbL, PsbM, PsbT, PsbX, PsbY, PsbZ, Psb30/Ycf12, peripheral proteins PsbO, CyanoQ (PsbQ), PsbU, PsbV and a large number of cofactors. It forms dimeric complexes. It depends on heme b as a cofactor.

Its subcellular location is the cellular thylakoid membrane. Its function is as follows. This b-type cytochrome is tightly associated with the reaction center of photosystem II (PSII). PSII is a light-driven water:plastoquinone oxidoreductase that uses light energy to abstract electrons from H(2)O, generating O(2) and a proton gradient subsequently used for ATP formation. It consists of a core antenna complex that captures photons, and an electron transfer chain that converts photonic excitation into a charge separation. In Synechococcus sp. (strain JA-2-3B'a(2-13)) (Cyanobacteria bacterium Yellowstone B-Prime), this protein is Cytochrome b559 subunit beta.